The sequence spans 60 residues: Cytotoxin 5 (60 aa).

Intrachain disulfides connect Cys3/Cys21, Cys14/Cys38, Cys42/Cys53, and Cys54/Cys59.

The protein belongs to the three-finger toxin family. Short-chain subfamily. Type IA cytotoxin sub-subfamily. As to quaternary structure, monomer in solution; Homodimer and oligomer in the presence of negatively charged lipids forming a pore with a size ranging between 20 and 30 Angstroms. As to expression, expressed by the venom gland.

The protein resides in the secreted. It localises to the target cell membrane. Shows cytolytic activity on many different cells by forming pore in lipid membranes. In vivo, increases heart rate or kills the animal by cardiac arrest. In addition, it binds to heparin with high affinity, interacts with Kv channel-interacting protein 1 (KCNIP1) in a calcium-independent manner, and binds to integrin alpha-V/beta-3 (ITGAV/ITGB3) with moderate affinity. This Naja annulifera (Banded Egyptian cobra) protein is Cytotoxin 5.